A 317-amino-acid chain; its full sequence is Methionyl-tRNA formyltransferase (317 aa).

Serine 112 to proline 115 is a binding site for (6S)-5,6,7,8-tetrahydrofolate.

This sequence belongs to the Fmt family.

It carries out the reaction L-methionyl-tRNA(fMet) + (6R)-10-formyltetrahydrofolate = N-formyl-L-methionyl-tRNA(fMet) + (6S)-5,6,7,8-tetrahydrofolate + H(+). In terms of biological role, attaches a formyl group to the free amino group of methionyl-tRNA(fMet). The formyl group appears to play a dual role in the initiator identity of N-formylmethionyl-tRNA by promoting its recognition by IF2 and preventing the misappropriation of this tRNA by the elongation apparatus. In Histophilus somni (strain 129Pt) (Haemophilus somnus), this protein is Methionyl-tRNA formyltransferase.